Here is a 257-residue protein sequence, read N- to C-terminus: Phosphate import ATP-binding protein PstB (257 aa).

The ABC transporter domain maps to isoleucine 11–isoleucine 252. Glycine 43–serine 50 lines the ATP pocket.

The protein belongs to the ABC transporter superfamily. Phosphate importer (TC 3.A.1.7) family. As to quaternary structure, the complex is composed of two ATP-binding proteins (PstB), two transmembrane proteins (PstC and PstA) and a solute-binding protein (PstS).

Its subcellular location is the cell inner membrane. The enzyme catalyses phosphate(out) + ATP + H2O = ADP + 2 phosphate(in) + H(+). Its function is as follows. Part of the ABC transporter complex PstSACB involved in phosphate import. Responsible for energy coupling to the transport system. The polypeptide is Phosphate import ATP-binding protein PstB (Escherichia coli O6:K15:H31 (strain 536 / UPEC)).